The sequence spans 240 residues: Ribonuclease HII (240 aa).

The 192-residue stretch at 31–222 (RLIAGVDEAG…VRRALGLETA (192 aa)) folds into the RNase H type-2 domain. A divalent metal cation-binding residues include Asp37, Glu38, and Asp130.

The protein belongs to the RNase HII family. Mn(2+) serves as cofactor. Mg(2+) is required as a cofactor.

It is found in the cytoplasm. The catalysed reaction is Endonucleolytic cleavage to 5'-phosphomonoester.. In terms of biological role, endonuclease that specifically degrades the RNA of RNA-DNA hybrids. This chain is Ribonuclease HII, found in Xanthomonas campestris pv. campestris (strain B100).